A 400-amino-acid polypeptide reads, in one-letter code: Enoyl-[acyl-carrier-protein] reductase [NADH] (400 aa).

Residues G48 to Y53, F74 to E75, D111 to A112, and L139 to A140 contribute to the NAD(+) site. Y225 is a binding site for substrate. The active-site Proton donor is Y235. Residues K244 and V273–T275 contribute to the NAD(+) site.

This sequence belongs to the TER reductase family. As to quaternary structure, monomer.

The enzyme catalyses a 2,3-saturated acyl-[ACP] + NAD(+) = a (2E)-enoyl-[ACP] + NADH + H(+). It participates in lipid metabolism; fatty acid biosynthesis. Its function is as follows. Involved in the final reduction of the elongation cycle of fatty acid synthesis (FAS II). Catalyzes the reduction of a carbon-carbon double bond in an enoyl moiety that is covalently linked to an acyl carrier protein (ACP). This chain is Enoyl-[acyl-carrier-protein] reductase [NADH], found in Shewanella frigidimarina (strain NCIMB 400).